The chain runs to 76 residues: Signal recognition particle 9 kDa protein (76 aa).

Belongs to the SRP9 family. Heterodimer with SRP14; binds RNA as heterodimer. Component of a signal recognition particle complex that consists of a 7SL RNA molecule of 300 nucleotides and six protein subunits: srpa-72, srpa-68, SRP54, F37F2.2/SRP19, F25G6.8/SRP14 and ZK512.4/SRP9.

It is found in the cytoplasm. Component of the signal recognition particle (SRP) complex, a ribonucleoprotein complex that mediates the cotranslational targeting of secretory and membrane proteins to the endoplasmic reticulum (ER). SRP9 together with SRP14 and the Alu portion of the SRP RNA, constitutes the elongation arrest domain of SRP. The complex of SRP9 and SRP14 is required for SRP RNA binding. The chain is Signal recognition particle 9 kDa protein from Caenorhabditis elegans.